The chain runs to 237 residues: MASNDTPAFANNEIMLKCEGLTRIYREGPQDVTVLDALELDVRAGERVAVVGSSGSGKTTLLNLLGGLDRPSAGEVRIAGQSLAEMGEAALGSFRNRHIGFVYQFHHLLAEFSALENVAMPLLIRGQTRQEAQARAREILAKVGMEARGEHKPGELSGGERQRVAIARALVTDPSLVLMDEPTGNLDQTTAGHILALMDGLAAQSACAFIIVTHDPGLAAHQDRVMRLDQGRLSEDA.

The ABC transporter domain occupies 16–237; the sequence is LKCEGLTRIY…LDQGRLSEDA (222 aa). 52-59 contributes to the ATP binding site; that stretch reads GSSGSGKT.

The protein belongs to the ABC transporter superfamily. Lipoprotein translocase (TC 3.A.1.125) family. As to quaternary structure, the complex is composed of two ATP-binding proteins (LolD) and two transmembrane proteins (LolC and LolE).

It localises to the cell inner membrane. Functionally, part of the ABC transporter complex LolCDE involved in the translocation of mature outer membrane-directed lipoproteins, from the inner membrane to the periplasmic chaperone, LolA. Responsible for the formation of the LolA-lipoprotein complex in an ATP-dependent manner. This Chromohalobacter salexigens (strain ATCC BAA-138 / DSM 3043 / CIP 106854 / NCIMB 13768 / 1H11) protein is Lipoprotein-releasing system ATP-binding protein LolD.